A 291-amino-acid chain; its full sequence is Protein-export membrane protein SecF (291 aa).

6 consecutive transmembrane segments (helical) span residues leucine 19–valine 39, leucine 134–phenylalanine 154, valine 156–alanine 176, leucine 187–asparagine 209, methionine 226–valine 246, and alanine 256–leucine 278.

Belongs to the SecD/SecF family. SecF subfamily. As to quaternary structure, part of the protein translocation apparatus. Forms a complex with SecD.

The protein localises to the cell membrane. Involved in protein export. The chain is Protein-export membrane protein SecF from Haloquadratum walsbyi (strain DSM 16790 / HBSQ001).